The primary structure comprises 59 residues: Large ribosomal subunit protein uL30 (59 aa).

The protein belongs to the universal ribosomal protein uL30 family. In terms of assembly, part of the 50S ribosomal subunit.

This Buchnera aphidicola subsp. Schizaphis graminum (strain Sg) protein is Large ribosomal subunit protein uL30.